We begin with the raw amino-acid sequence, 969 residues long: Squamosa promoter-binding-like protein 6 (969 aa).

2 disordered regions span residues 1-25 (MEAARVGAQSRHLYGGGLGEPDMDR) and 54-81 (EASGLALNSSPSSSEEAGAASVRNVNAR). Positions 55-74 (ASGLALNSSPSSSEEAGAAS) are enriched in low complexity. An SBP-type zinc finger spans residues 149-226 (GPACQVEGCT…AGHNRRRRKT (78 aa)). Residues cysteine 152, cysteine 157, cysteine 174, histidine 177, cysteine 193, cysteine 196, histidine 200, and cysteine 212 each contribute to the Zn(2+) site. The Bipartite nuclear localization signal motif lies at 209 to 225 (KRSCRRRLAGHNRRRRK). The tract at residues 377 to 434 (GMEGFEDGYEGSPTPAFKTTDSPNCPSWMHQDSTQSPPQTSGNSDSTSAQSLSSSNGD) is disordered. A compositionally biased stretch (polar residues) spans 393-419 (FKTTDSPNCPSWMHQDSTQSPPQTSGN). Low complexity predominate over residues 420–431 (SDSTSAQSLSSS).

Ubiquitous.

It localises to the nucleus. Its function is as follows. Trans-acting factor that binds specifically to the consensus nucleotide sequence 5'-TNCGTACAA-3'. This chain is Squamosa promoter-binding-like protein 6 (SPL6), found in Oryza sativa subsp. japonica (Rice).